The sequence spans 504 residues: Cytochrome P450 monooxygenase braC (504 aa).

A helical transmembrane segment spans residues 4-24 (LYLPTIWASTLTAATIFIVAV). Heme is bound at residue cysteine 448.

Belongs to the cytochrome P450 family. Requires heme as cofactor.

It localises to the membrane. The protein operates within secondary metabolite biosynthesis. Cytochrome P450 monooxygenase; part of the gene cluster that mediates the biosynthesis of the brasilane terpene glycosides brasilane D and E. The biosynthesis starts with the activity of the terpene cyclase braA that converts farnesyl pyrophosphate into the sesquiterpene alcohol trichobrasilenol. Subsequently, trichobrasilenol is glycosylated by the O-glycosyltransferase braB putatively using UDP-GlcNAc as sugar donor to yield brasilane A. The latter then undergoes two rounds of oxidation performed by the cytochrome P450 monooxygenase braC. In the first round braC hydroxylates C-12 forming brasilane D, which serves as substrate in the second round to establish the epoxide at the bond between C-5 and C-10 and oxidize the alcohol at C-12 to an aldehyde leading to the final product brasilane E. The protein is Cytochrome P450 monooxygenase braC of Annulohypoxylon truncatum (Hypoxylon truncatum).